The sequence spans 198 residues: uncharacterized protein (198 aa).

The disordered stretch occupies residues 51–74 (EEPDNGDDRGSRRTTGQGRKWAAH).

This is an uncharacterized protein from Homo sapiens (Human).